The following is a 346-amino-acid chain: Immunoglobulin heavy constant alpha (346 aa).

Ig-like domains lie at 6–96 (PSIF…KSVD), 118–212 (PRLS…VSIT), and 221–323 (PQVH…KSID). Cys26 and Cys83 are oxidised to a cystine. N-linked (GlcNAc...) (complex) asparagine glycosylation occurs at Asn134. 2 disulfides stabilise this stretch: Cys139–Cys196 and Cys243–Cys306. Asn333 carries N-linked (GlcNAc...) (complex) asparagine glycosylation.

As to quaternary structure, immunoglobulins are composed of two identical heavy chains and two identical light chains; disulfide-linked. Monomeric or polymeric. Part of the secretory IgA (sIgA) complex that consists of two, four or five IgA monomers, and two additional non-Ig polypeptides, namely the JCHAIN and the secretory component (the proteolytic product of PIGR). In terms of processing, N-glycosylated. N-glycans attached to Asn-134 varies from differentially fucosylated complex and hybrid to sialylated with N-glycoyl neuraminic acid types: GlcNAc2Man3GlcNAc2(Fuc); GlcNAc1Man4GlcNAc2(Fuc); GlcNAc1Man4GlcNAc2; Gal1GlcNAc2Man3GlcNAc2(Fuc); GlcNAc2Man3GlcNAc2; Gal1GlcNAc2Man3GlcNAc2; GlcNAc1Man3GlcNAc2; GlcNAc1Man2GlcNAc2 and NeuGc1Gal1GlcNAc2Man3GlcNAc2(Fuc). N-glycans attached to Asn-333 are mainly fucosylated complex types: GlcNAc2Man3GlcNAc2; GlcNAc1Man3GlcNAc2; GlcNAc1Man3GlcNAc2(Fuc); GlcNAc2Man3GlcNAc2(Fuc); Gal1GlcNAc2Man3GlcNAc2(Fuc); NeuGc1Gal1GlcNAc1Man3GlcNAc2(Fuc); NeuGc1Gal1GlcNAc2Man3GlcNAc2(Fuc) and NeuAc1Gal1GlcNAc2Man3GlcNAc2(Fuc).

It is found in the secreted. It localises to the cell membrane. Constant region of immunoglobulin heavy chains. Immunoglobulins, also known as antibodies, are membrane-bound or secreted glycoproteins produced by B lymphocytes. In the recognition phase of humoral immunity, the membrane-bound immunoglobulins serve as receptors which, upon binding of a specific antigen, trigger the clonal expansion and differentiation of B lymphocytes into immunoglobulins-secreting plasma cells. Secreted immunoglobulins mediate the effector phase of humoral immunity, which results in the elimination of bound antigens. The antigen binding site is formed by the variable domain of one heavy chain, together with that of its associated light chain. Thus, each immunoglobulin has two antigen binding sites with remarkable affinity for a particular antigen. The variable domains are assembled by a process called V-(D)-J rearrangement and can then be subjected to somatic hypermutations which, after exposure to antigen and selection, allow affinity maturation for a particular antigen. Ig alpha is the major immunoglobulin class in body secretions. The protein is Immunoglobulin heavy constant alpha (IGHA) of Equus asinus (Donkey).